A 405-amino-acid polypeptide reads, in one-letter code: MNLDGTSGGFPAEEDHHNEERQTKNKRKTKHRHKFSEELLQELKEIFGENCYPDYTTRKTLAIKFDCPVNVIDNWFQNKRARLPPAERRRIFVLQKKHDFPVQAHSFLSCQETQAAAHNYATKQSLSGAQRALMRRAGCSHLEKQWIPSQEMGYNCFSLENQETPSQQVGPQCSYLEKPGIPSQQVGSQCSYLEKLGIPSQQVASQSSYLVTGTEKHPGCAMGYGGDTGSGHSGSGHSTAYHFLSYNSAECLHPPPSSVPYFHGERTETKESQHASPFLLDYAQGAYGVKKDHCLCSFCLSLLGQQQQNDWQYHLQQHQQPQNYLEGMMLQEQLPMDSGPWDLGKQWSSAQSQLQSQLPQNNGKPLCSQLQHMSLQIAADSPLLPLGQDMQERASEQPRTQMQQL.

2 disordered regions span residues 1–33 and 340–363; these read MNLDGTSGGFPAEEDHHNEERQTKNKRKTKHRH and PWDLGKQWSSAQSQLQSQLPQNNG. The span at 13–23 shows a compositional bias: basic and acidic residues; that stretch reads EEDHHNEERQT. Basic residues predominate over residues 24-33; that stretch reads KNKRKTKHRH. The segment at residues 28 to 87 is a DNA-binding region (homeobox); the sequence is KTKHRHKFSEELLQELKEIFGENCYPDYTTRKTLAIKFDCPVNVIDNWFQNKRARLPPAE. Residues 346-360 are compositionally biased toward low complexity; it reads QWSSAQSQLQSQLPQ.

Its subcellular location is the nucleus. Functionally, transcription factor that acts as activator. The polypeptide is Cytoplasmic polyadenylated homeobox-like protein (Homo sapiens (Human)).